The primary structure comprises 514 residues: MALLSQAGGAYTVPSGHVSSRTGTKTVSGCVNVLRMKETYVSSYSRTLSTKSMLKRSKRGHQLIVAASPPTEEAVVATEPLTREDLIAYLASGCKSKEKWRIGTEHEKFGFEVNTLRPMKYDQIAELLNSIAERFEWEKVMEGDKIIGLKQGKQSISLEPGGQFELSGAPLETLHQTCAEVNSHLYQVKAVAEEMGIGFLGMGFQPKWRREDIPTMPKGRYDIMRNYMPKVGSLGLDMMLRTCTVQVNLDFSSEADMIRKFRAGLALQPIATALFANSPFTEGKPNGFLSMRSHIWTDTDKDRTGMLPFVFDDSFGFEQYVDYALDVPMYFAYRNGKYVDCTGMTFRQFLAGKLPCLPGELPTYNDWENHLTTIFPEVRLKRYMEMRGADGGPWRRLCALPAFWVGLLYDEDVLQSVLDLTADWTPAEREMLRNKVPVTGLKTPFRDGLLKHVAEDVLKLAKDGLERRGYKEVGFLNAVTEVVRTGVTPAENLLEMYNGEWGQSVDPVFQELLY.

A chloroplast-targeting transit peptide spans 1 to 55 (MALLSQAGGAYTVPSGHVSSRTGTKTVSGCVNVLRMKETYVSSYSRTLSTKSMLK). 2 disulfides stabilise this stretch: cysteine 178/cysteine 398 and cysteine 341/cysteine 356.

It belongs to the carboxylate-amine ligase family. Glutamate--cysteine ligase type 2 subfamily. In terms of assembly, homodimer or monomer when oxidized or reduced, respectively. The Cys-178-Cys-398 disulfide bridge is known to modulate the enzyme activity according to the redox status. The oxidized form constitutes the active enzyme.

The protein resides in the plastid. Its subcellular location is the chloroplast. It catalyses the reaction L-cysteine + L-glutamate + ATP = gamma-L-glutamyl-L-cysteine + ADP + phosphate + H(+). It functions in the pathway sulfur metabolism; glutathione biosynthesis; glutathione from L-cysteine and L-glutamate: step 1/2. Its function is as follows. Participates in the detoxification process. The polypeptide is Glutamate--cysteine ligase, chloroplastic (GSH1) (Brassica juncea (Indian mustard)).